The following is a 293-amino-acid chain: ATP synthase subunit a (293 aa).

6 consecutive transmembrane segments (helical) span residues 40–60, 97–117, 151–171, 188–208, 225–245, and 264–284; these read DSLF…WLAA, LFVA…NALD, DLNV…YYGI, FHAH…LNLI, MFAG…WTGF, and AIFH…LTLV.

This sequence belongs to the ATPase A chain family. As to quaternary structure, F-type ATPases have 2 components, CF(1) - the catalytic core - and CF(0) - the membrane proton channel. CF(1) has five subunits: alpha(3), beta(3), gamma(1), delta(1), epsilon(1). CF(0) has three main subunits: a(1), b(2) and c(9-12). The alpha and beta chains form an alternating ring which encloses part of the gamma chain. CF(1) is attached to CF(0) by a central stalk formed by the gamma and epsilon chains, while a peripheral stalk is formed by the delta and b chains.

It is found in the cell inner membrane. Its function is as follows. Key component of the proton channel; it plays a direct role in the translocation of protons across the membrane. This is ATP synthase subunit a from Bordetella bronchiseptica (strain ATCC BAA-588 / NCTC 13252 / RB50) (Alcaligenes bronchisepticus).